We begin with the raw amino-acid sequence, 929 residues long: Isoleucine--tRNA ligase (929 aa).

The 'HIGH' region signature appears at Pro58–His68. Glu563 is an L-isoleucyl-5'-AMP binding site. The short motif at Lys605 to Ser609 is the 'KMSKS' region element. Position 608 (Lys608) interacts with ATP. Residues Cys892, Cys895, Cys912, and Cys915 each coordinate Zn(2+).

The protein belongs to the class-I aminoacyl-tRNA synthetase family. IleS type 1 subfamily. Monomer. It depends on Zn(2+) as a cofactor.

It localises to the cytoplasm. The enzyme catalyses tRNA(Ile) + L-isoleucine + ATP = L-isoleucyl-tRNA(Ile) + AMP + diphosphate. In terms of biological role, catalyzes the attachment of isoleucine to tRNA(Ile). As IleRS can inadvertently accommodate and process structurally similar amino acids such as valine, to avoid such errors it has two additional distinct tRNA(Ile)-dependent editing activities. One activity is designated as 'pretransfer' editing and involves the hydrolysis of activated Val-AMP. The other activity is designated 'posttransfer' editing and involves deacylation of mischarged Val-tRNA(Ile). The chain is Isoleucine--tRNA ligase from Neisseria gonorrhoeae (strain NCCP11945).